The primary structure comprises 296 residues: Acetylglutamate kinase (296 aa).

Substrate-binding positions include 67–68, Arg-89, and Asn-194; that span reads GG.

The protein belongs to the acetylglutamate kinase family. ArgB subfamily.

Its subcellular location is the cytoplasm. The enzyme catalyses N-acetyl-L-glutamate + ATP = N-acetyl-L-glutamyl 5-phosphate + ADP. It functions in the pathway amino-acid biosynthesis; L-arginine biosynthesis; N(2)-acetyl-L-ornithine from L-glutamate: step 2/4. Its function is as follows. Catalyzes the ATP-dependent phosphorylation of N-acetyl-L-glutamate. The sequence is that of Acetylglutamate kinase from Brucella canis (strain ATCC 23365 / NCTC 10854 / RM-666).